Consider the following 495-residue polypeptide: D-hydantoinase/dihydropyrimidinase (495 aa).

Residues H59, H61, and K150 each contribute to the Zn(2+) site. K150 is subject to N6-carboxylysine. Y155 lines the substrate pocket. Positions 183 and 239 each coordinate Zn(2+). S289 contributes to the substrate binding site. A Zn(2+)-binding site is contributed by D316. N337 serves as a coordination point for substrate.

This sequence belongs to the metallo-dependent hydrolases superfamily. Hydantoinase/dihydropyrimidinase family. In terms of assembly, homotetramer. Zn(2+) is required as a cofactor. In terms of processing, carboxylation allows a single lysine to coordinate two zinc ions.

The enzyme catalyses 5,6-dihydrouracil + H2O = 3-(carbamoylamino)propanoate + H(+). Its function is as follows. Catalyzes the hydrolysis of dihydropyrimidines and of the structurally related DL-5-mono-substituted hydantoins, to produce N-carbamoyl-D-amino acids. This Pseudomonas putida (Arthrobacter siderocapsulatus) protein is D-hydantoinase/dihydropyrimidinase.